Here is a 620-residue protein sequence, read N- to C-terminus: Glutathione-regulated potassium-efflux system protein KefC (620 aa).

A run of 12 helical transmembrane segments spans residues 4–24, 26–46, 54–74, 90–110, 114–134, 149–169, 178–198, 218–238, 270–290, 294–314, 327–347, and 359–379; these read HTLIQALIYLGSAALIVPIAV, LGLGSVLGYLIAGCIIGPWGL, SILHFAEIGVVLMLFIIGLEL, GALQMVICGGLLGLFCMLLGL, VAELIGMTLALSSTAIAMQAM, FAVLLFQDIAAIPLVAMIPLL, MGAFALSALKVAGALVLVVLL, VFSAVALFLVFGFGLLLEEVG, GLLLGLFFIGVGMSIDFGTLL, LRIVILLLGFLIIKIAMLWLI, WFAVLLGQGSEFAFVVFGAAQ, and SLTLAVALSMAATPILLVILN. The RCK N-terminal domain occupies 399–518; the sequence is QPRVIIAGFG…AGVEKPERET (120 aa). The disordered stretch occupies residues 597–620; sequence GWQGTEEGKHTGNMADEPETKPSS.

Belongs to the monovalent cation:proton antiporter 2 (CPA2) transporter (TC 2.A.37) family. KefC subfamily. In terms of assembly, homodimer. Interacts with the regulatory subunit KefF.

The protein resides in the cell inner membrane. Its function is as follows. Pore-forming subunit of a potassium efflux system that confers protection against electrophiles. Catalyzes K(+)/H(+) antiport. The chain is Glutathione-regulated potassium-efflux system protein KefC from Escherichia coli (strain K12 / MC4100 / BW2952).